A 247-amino-acid chain; its full sequence is Probable transcriptional regulatory protein EUBELI_00902 (247 aa).

It belongs to the TACO1 family.

The protein resides in the cytoplasm. This chain is Probable transcriptional regulatory protein EUBELI_00902, found in Lachnospira eligens (strain ATCC 27750 / DSM 3376 / VPI C15-48 / C15-B4) (Eubacterium eligens).